The following is a 310-amino-acid chain: Olfactory receptor 8B8 (310 aa).

The Extracellular portion of the chain corresponds to 1–27; sequence MATENASVPEFILAGLTDQPGLRMPLF. Residue asparagine 5 is glycosylated (N-linked (GlcNAc...) asparagine). The chain crosses the membrane as a helical span at residues 28–48; sequence FLFLGFYMVTMVGNLGLITLI. Residues 49-55 are Cytoplasmic-facing; it reads GLNSHLH. Residues 56-76 form a helical membrane-spanning segment; it reads TPMYFFLFNLSLIDFCYSTVI. The Extracellular segment spans residues 77-98; sequence TPKMLVSFVSKKNIISYSGCMT. A disulfide bond links cysteine 96 and cysteine 188. Residues 99–119 traverse the membrane as a helical segment; sequence QLFFFLFFVVSESFILSAMAY. At 120-140 the chain is on the cytoplasmic side; that stretch reads DRYVAICNPLMYTVTMSPQVC. The chain crosses the membrane as a helical span at residues 141–161; sequence LLLLLGVYVMGFAGAMAHTAF. Residues 162–195 are Extracellular-facing; it reads MVKLTFCADKLVNHYMCDILPLLERSCTSTYVNE. The chain crosses the membrane as a helical span at residues 196 to 216; it reads LVVFIVVGIDIGVPTVTIFIS. The Cytoplasmic portion of the chain corresponds to 217–238; sequence YALILSSILRISSTEGRSKAFS. Residues 239–259 traverse the membrane as a helical segment; sequence TCSSHIIAVSLFFGSGAFMYL. Topologically, residues 260–270 are extracellular; sequence KPSSLLPMNQG. The helical transmembrane segment at 271 to 291 threads the bilayer; sequence KVSSLFYTIVVPMLNPLIYSL. The Cytoplasmic segment spans residues 292-310; the sequence is RNKDVKVALRKTLSRSSFS.

Belongs to the G-protein coupled receptor 1 family.

It is found in the cell membrane. Functionally, odorant receptor. The polypeptide is Olfactory receptor 8B8 (Mus musculus (Mouse)).